A 382-amino-acid polypeptide reads, in one-letter code: V-type proton ATPase subunit C 1 (382 aa).

Thr-2 is subject to N-acetylthreonine.

This sequence belongs to the V-ATPase C subunit family. V-ATPase is a heteromultimeric enzyme made up of two complexes: the ATP-hydrolytic V1 complex and the proton translocation V0 complex. The V1 complex consists of three catalytic AB heterodimers that form a heterohexamer, three peripheral stalks each consisting of EG heterodimers, one central rotor including subunits D and F, and the regulatory subunits C and H. The proton translocation complex V0 consists of the proton transport subunit a, a ring of proteolipid subunits c9c'', rotary subunit d, subunits e and f, and two accessory subunits.

Its function is as follows. Subunit of the V1 complex of vacuolar(H+)-ATPase (V-ATPase), a multisubunit enzyme composed of a peripheral complex (V1) that hydrolyzes ATP and a membrane integral complex (V0) that translocates protons. V-ATPase is responsible for acidifying and maintaining the pH of intracellular compartments and in some cell types, is targeted to the plasma membrane, where it is responsible for acidifying the extracellular environment. Subunit C is necessary for the assembly of the catalytic sector of the enzyme and is likely to have a specific function in its catalytic activity. The polypeptide is V-type proton ATPase subunit C 1 (atp6v1c1) (Xenopus tropicalis (Western clawed frog)).